The chain runs to 346 residues: MRSSVQPLINEIRQQFLHDLEQVQTTLELEQLKIKFLGKKGSLQGLMKELKNVEPDQRPLVGKFINELKEFMSNHCDELEHQLIAKEENAQLAHETIDVTLPGRQRFVGRKHPLTQAMDQIIHILSKMGFSVQYGPDIDTDYYNFEILNFPPEHPARDMQDTFYISPHVLLRTHTSNIQARAMELNRPPIRIIAPGKVYRNETITARSHVFFHQVEAVYIDQHVSFADLFATMDEFLKKLFKQTIETRYRPSYFPFVEPGLEVDISCLVCEGKGCQLCKHTGWVEVAGAGMIHPEVLKNGGIDPEHYSGFAWGMGLERLVMMLRGIQDIRLFTENDLRFLQQFTLL.

Glutamate 258 is a Mg(2+) binding site.

This sequence belongs to the class-II aminoacyl-tRNA synthetase family. Phe-tRNA synthetase alpha subunit type 1 subfamily. Tetramer of two alpha and two beta subunits. Requires Mg(2+) as cofactor.

It localises to the cytoplasm. It carries out the reaction tRNA(Phe) + L-phenylalanine + ATP = L-phenylalanyl-tRNA(Phe) + AMP + diphosphate + H(+). The chain is Phenylalanine--tRNA ligase alpha subunit from Protochlamydia amoebophila (strain UWE25).